Here is a 280-residue protein sequence, read N- to C-terminus: MINNLKTFILLASLTALLVVIGGLLGGSTGMLIALVFAGVMNFSAYWYSDVLVLKMYNAEPLPNNHFVNNIISELAHRAGTPVPKVYLINNSTPNAFATGRNPENASIAVTTGLLDRLTQEEITGVLAHELAHVIHRDTLINVVSATIAGAISGIANMFMWLSMFGHNSNNEEGVHPVVGMIMMIVAPLAAGLIQMAISRSREFEADAGGARISGNPQWLASALLKLDQANHEQYFDEAETHPSTAHLFIINPLNGEKLANLFSTHPSTAERVARLRAMY.

2 helical membrane-spanning segments follow: residues 7 to 26 (TFILLASLTALLVVIGGLLG) and 30 to 49 (GMLIALVFAGVMNFSAYWYS). A Zn(2+)-binding site is contributed by H129. E130 is an active-site residue. H133 serves as a coordination point for Zn(2+). A run of 2 helical transmembrane segments spans residues 146–166 (ATIAGAISGIANMFMWLSMFG) and 178–198 (VVGMIMMIVAPLAAGLIQMAI). A Zn(2+)-binding site is contributed by E203.

This sequence belongs to the peptidase M48B family. Zn(2+) is required as a cofactor.

It is found in the cell inner membrane. The sequence is that of Protease HtpX from Legionella pneumophila subsp. pneumophila (strain Philadelphia 1 / ATCC 33152 / DSM 7513).